Consider the following 426-residue polypeptide: Serine--tRNA ligase (426 aa).

Residue 235 to 237 (TAE) participates in L-serine binding. Residue 266 to 268 (RRE) participates in ATP binding. Glu289 is an L-serine binding site. 353–356 (EISS) is a binding site for ATP. Ser389 provides a ligand contact to L-serine.

This sequence belongs to the class-II aminoacyl-tRNA synthetase family. Type-1 seryl-tRNA synthetase subfamily. In terms of assembly, homodimer. The tRNA molecule binds across the dimer.

It localises to the cytoplasm. It catalyses the reaction tRNA(Ser) + L-serine + ATP = L-seryl-tRNA(Ser) + AMP + diphosphate + H(+). The enzyme catalyses tRNA(Sec) + L-serine + ATP = L-seryl-tRNA(Sec) + AMP + diphosphate + H(+). Its pathway is aminoacyl-tRNA biosynthesis; selenocysteinyl-tRNA(Sec) biosynthesis; L-seryl-tRNA(Sec) from L-serine and tRNA(Sec): step 1/1. Its function is as follows. Catalyzes the attachment of serine to tRNA(Ser). Is also able to aminoacylate tRNA(Sec) with serine, to form the misacylated tRNA L-seryl-tRNA(Sec), which will be further converted into selenocysteinyl-tRNA(Sec). The sequence is that of Serine--tRNA ligase from Nostoc sp. (strain PCC 7120 / SAG 25.82 / UTEX 2576).